Consider the following 450-residue polypeptide: UDP-N-acetylmuramoylalanine--D-glutamate ligase (450 aa).

119-125 (GSNGKTT) contributes to the ATP binding site.

Belongs to the MurCDEF family.

The protein localises to the cytoplasm. The enzyme catalyses UDP-N-acetyl-alpha-D-muramoyl-L-alanine + D-glutamate + ATP = UDP-N-acetyl-alpha-D-muramoyl-L-alanyl-D-glutamate + ADP + phosphate + H(+). It participates in cell wall biogenesis; peptidoglycan biosynthesis. Cell wall formation. Catalyzes the addition of glutamate to the nucleotide precursor UDP-N-acetylmuramoyl-L-alanine (UMA). In Streptococcus pneumoniae (strain ATCC 700669 / Spain 23F-1), this protein is UDP-N-acetylmuramoylalanine--D-glutamate ligase.